Here is a 194-residue protein sequence, read N- to C-terminus: Peptidyl-tRNA hydrolase (194 aa).

Tyr-16 provides a ligand contact to tRNA. Residue His-21 is the Proton acceptor of the active site. TRNA is bound by residues Phe-67, Asn-69, and Asn-115.

It belongs to the PTH family. In terms of assembly, monomer.

The protein localises to the cytoplasm. The catalysed reaction is an N-acyl-L-alpha-aminoacyl-tRNA + H2O = an N-acyl-L-amino acid + a tRNA + H(+). Its function is as follows. Hydrolyzes ribosome-free peptidyl-tRNAs (with 1 or more amino acids incorporated), which drop off the ribosome during protein synthesis, or as a result of ribosome stalling. Functionally, catalyzes the release of premature peptidyl moieties from peptidyl-tRNA molecules trapped in stalled 50S ribosomal subunits, and thus maintains levels of free tRNAs and 50S ribosomes. The sequence is that of Peptidyl-tRNA hydrolase from Salmonella heidelberg (strain SL476).